The chain runs to 304 residues: Acetylglutamate kinase (304 aa).

Substrate contacts are provided by residues 75–76, R97, and N196; that span reads GG.

Belongs to the acetylglutamate kinase family. ArgB subfamily.

It is found in the cytoplasm. It carries out the reaction N-acetyl-L-glutamate + ATP = N-acetyl-L-glutamyl 5-phosphate + ADP. It functions in the pathway amino-acid biosynthesis; L-arginine biosynthesis; N(2)-acetyl-L-ornithine from L-glutamate: step 2/4. Its function is as follows. Catalyzes the ATP-dependent phosphorylation of N-acetyl-L-glutamate. The protein is Acetylglutamate kinase of Corynebacterium urealyticum (strain ATCC 43042 / DSM 7109).